A 228-amino-acid polypeptide reads, in one-letter code: Small ribosomal subunit protein uS3 (228 aa).

A KH type-2 domain is found at 39–107 (VREYLQDKLK…PVHINIEEIR (69 aa)).

This sequence belongs to the universal ribosomal protein uS3 family. Part of the 30S ribosomal subunit. Forms a tight complex with proteins S10 and S14.

Functionally, binds the lower part of the 30S subunit head. Binds mRNA in the 70S ribosome, positioning it for translation. The protein is Small ribosomal subunit protein uS3 of Pseudomonas aeruginosa (strain UCBPP-PA14).